The chain runs to 116 residues: NADH-ubiquinone oxidoreductase chain 3 (116 aa).

A run of 3 helical transmembrane segments spans residues 4-24 (LIITLITNSLLSTIIIIIAFW), 56-76 (FFLVAITFLLFDLEIALLLPL), and 88-108 (TLILSYCLIMLLTVGLAYEWI).

Belongs to the complex I subunit 3 family. In terms of assembly, core subunit of respiratory chain NADH dehydrogenase (Complex I) which is composed of 45 different subunits. Interacts with TMEM186. Interacts with TMEM242.

The protein resides in the mitochondrion inner membrane. It carries out the reaction a ubiquinone + NADH + 5 H(+)(in) = a ubiquinol + NAD(+) + 4 H(+)(out). Functionally, core subunit of the mitochondrial membrane respiratory chain NADH dehydrogenase (Complex I) which catalyzes electron transfer from NADH through the respiratory chain, using ubiquinone as an electron acceptor. Essential for the catalytic activity of complex I. This Didelphis virginiana (North American opossum) protein is NADH-ubiquinone oxidoreductase chain 3.